The primary structure comprises 24 residues: Brevinin-1BYc (24 aa).

A disulfide bond links Cys18 and Cys24.

In terms of tissue distribution, expressed by the skin glands.

It localises to the secreted. Functionally, antibacterial activity against Gram-positive bacterium S.aureus. Weak antifungal activity against C.albicans. This is Brevinin-1BYc from Rana boylii (Foothill yellow-legged frog).